The sequence spans 633 residues: Probable alkaline/neutral invertase A, chloroplastic (633 aa).

The N-terminal 71 residues, 1–71 (MNAITFLGNS…TNAVPFCTDR (71 aa)), are a transit peptide targeting the chloroplast. A Phosphoserine modification is found at Ser623.

Belongs to the glycosyl hydrolase 100 family. As to expression, expressed in flowers.

It is found in the plastid. It localises to the chloroplast. It carries out the reaction Hydrolysis of terminal non-reducing beta-D-fructofuranoside residues in beta-D-fructofuranosides.. In terms of biological role, chloroplastic invertase that cleaves sucrose into glucose and fructose and may participate in the carbon flux between the cytosol and plastids in leaves. This Arabidopsis thaliana (Mouse-ear cress) protein is Probable alkaline/neutral invertase A, chloroplastic.